A 115-amino-acid chain; its full sequence is Large ribosomal subunit protein bL19 (115 aa).

The protein belongs to the bacterial ribosomal protein bL19 family.

Its function is as follows. This protein is located at the 30S-50S ribosomal subunit interface and may play a role in the structure and function of the aminoacyl-tRNA binding site. The polypeptide is Large ribosomal subunit protein bL19 (Streptococcus pyogenes serotype M2 (strain MGAS10270)).